We begin with the raw amino-acid sequence, 1299 residues long: MLDVTTFDELRIGLATADDIRRWSHGEVKKPETINYRTLKPEKDGLFGEQIFGPSRDWECSCGKYKRVRFKGIVCERCGVEVTKSAVRRERMGHIELAAPVTHIWYFKGVPSRLGYLLDMAPKDLEKVIYFAAYMVISVDEDARHEDMPGLENELRLEIKTLQDQRDSQIAERLGRLETDLAALEAEGAKSDQKRRAKDGAEKEMGQTRKAFDEDISRLERVWEEFRSLKVGELKPEDAVFHELQDRFGIYFEAHMGAEAIQKRLEAFDLEAEGELLREQIATGKGQKKIRAIKRLRVVSSFLATGNSPAAMVLQVVPVIPPELRPMVQLDGGRFATSDLNDLYRRVINRNNRLRRLLDLGAPEIIVNNEKRMLQEAVDALFDNGRRGRPVTGTGNRALKSLSDMLKGKQGRFRQNLLGKRVDYSGRSVIIVGPQLKLHQCGLPKQMALELFKPFVIKRLIDLSHAQNIKAAKRMVERSRGQVWDVLEEIIRERPVLLNRAPTLHRLGIQAFEPQLVEGKAIQLHPLVCAAFNADFDGDQMAVHLPLSVEAQAEARILMLASNNILKPSDGRPVTLPTQDMIIGLHHLTTLKEGVAGEGRAFSSVAEAILAKDQLSLDLNAKVRIRLHDIYFGEGEAPEGVELDEKGKTVGPVLLETTLGRALFNETLPVDYPYIEAVADKGKLSEIVNDLAERYPKVEVAAALDRIKDAGFYWATRSGVTVALSDVLTPPTKAAILSGYEKQAAKVQGQFEKGLTTNAERRQELIEIWNKATAEVAKAMEDNLPADNNINRMVSSGARGNWMQVRQIAGMRGLVSNPKGEIIPRPIVHSYREGLTVAEYFISTHGARKGLADTALRTADSGYLTRRLVDVSQDVIIREDDCGTGRGLDLPIATKGADGSSVRDSNVENSVYARSLAADAVNEAGEVVAPAGSDVGDVMIDHLIAAGVHEIKVRSVLTCESAVGVCAACYGRSLATGKLVDIGEAVGIIAAQSIGEPGTQLTMRTFHTGGVASADDITQGLPRVQELFEARTPKGASPIAEAAGRITIEDTDRSRKVILTPDNGDEPHIYPVLKRATLLVEDGQHVELGQQLHVGAIDPKEVLRVKGVREVQKHLVGGVQGVYRSQGVPIHDKHIEVIVRQMLRKVTVVEHGDTDLLPGELVDRARYNEVNRATLTEGKKTASARQEVMGITKASLATESWLSAASFQETTRVLTQAAMEGKSDPLMGLKENVIIGKLIPAGTGLAKYRDVTVTATEEAKAERYPNRIFTDESVFNESDLSFVDFDSFSSDDYTPGTYN.

Residues Cys-60, Cys-62, Cys-75, and Cys-78 each coordinate Zn(2+). Positions 188–209 (GAKSDQKRRAKDGAEKEMGQTR) are disordered. Mg(2+) is bound by residues Asp-535, Asp-537, and Asp-539. The Zn(2+) site is built by Cys-882, Cys-959, Cys-966, and Cys-969.

The protein belongs to the RNA polymerase beta' chain family. As to quaternary structure, the RNAP catalytic core consists of 2 alpha, 1 beta, 1 beta' and 1 omega subunit. When a sigma factor is associated with the core the holoenzyme is formed, which can initiate transcription. It depends on Mg(2+) as a cofactor. Zn(2+) serves as cofactor.

The catalysed reaction is RNA(n) + a ribonucleoside 5'-triphosphate = RNA(n+1) + diphosphate. In terms of biological role, DNA-dependent RNA polymerase catalyzes the transcription of DNA into RNA using the four ribonucleoside triphosphates as substrates. The chain is DNA-directed RNA polymerase subunit beta' from Clavibacter michiganensis subsp. michiganensis (strain NCPPB 382).